The sequence spans 337 residues: DNA-directed RNA polymerase subunit alpha (337 aa).

An alpha N-terminal domain (alpha-NTD) region spans residues 1–233 (MIQKNWQELI…DQLSIFVNFE (233 aa)). Positions 249–337 (FNPALLKKVD…DLAKRYEDQY (89 aa)) are alpha C-terminal domain (alpha-CTD).

The protein belongs to the RNA polymerase alpha chain family. As to quaternary structure, homodimer. The RNAP catalytic core consists of 2 alpha, 1 beta, 1 beta' and 1 omega subunit. When a sigma factor is associated with the core the holoenzyme is formed, which can initiate transcription.

The catalysed reaction is RNA(n) + a ribonucleoside 5'-triphosphate = RNA(n+1) + diphosphate. Its function is as follows. DNA-dependent RNA polymerase catalyzes the transcription of DNA into RNA using the four ribonucleoside triphosphates as substrates. The chain is DNA-directed RNA polymerase subunit alpha from Brucella abortus (strain S19).